We begin with the raw amino-acid sequence, 141 residues long: Large ribosomal subunit protein uL11 (141 aa).

The protein belongs to the universal ribosomal protein uL11 family. Part of the ribosomal stalk of the 50S ribosomal subunit. Interacts with L10 and the large rRNA to form the base of the stalk. L10 forms an elongated spine to which L12 dimers bind in a sequential fashion forming a multimeric L10(L12)X complex. Post-translationally, one or more lysine residues are methylated.

Its function is as follows. Forms part of the ribosomal stalk which helps the ribosome interact with GTP-bound translation factors. This is Large ribosomal subunit protein uL11 from Limosilactobacillus reuteri (strain DSM 20016) (Lactobacillus reuteri).